The following is a 122-amino-acid chain: Large ribosomal subunit protein uL14 (122 aa).

This sequence belongs to the universal ribosomal protein uL14 family. In terms of assembly, part of the 50S ribosomal subunit. Forms a cluster with proteins L3 and L19. In the 70S ribosome, L14 and L19 interact and together make contacts with the 16S rRNA in bridges B5 and B8.

Its function is as follows. Binds to 23S rRNA. Forms part of two intersubunit bridges in the 70S ribosome. The protein is Large ribosomal subunit protein uL14 of Pelagibacter ubique (strain HTCC1062).